Consider the following 853-residue polypeptide: Envelope glycoprotein gp160 (853 aa).

The N-terminal stretch at 1–31 (MRVRGIERNCQNLWKWGIMLLGILMTCSNAD) is a signal peptide. Topologically, residues 32-681 (NLWVTVYYGV…ITQWLWYIKI (650 aa)) are extracellular. An intrachain disulfide couples Cys53 to Cys73. Residues Asn87, Asn137, Asn144, Asn153, Asn157, Asn185, Asn188, Asn198, Asn235, Asn242, Asn263, Asn277, Asn290, and Asn296 are each glycosylated (N-linked (GlcNAc...) asparagine; by host). Disulfide bonds link Cys118-Cys206, Cys125-Cys197, Cys130-Cys154, Cys219-Cys248, and Cys229-Cys240. Residues 130 to 153 (CIDEVMENVTMKNNNVTEEIRMKN) form a V1 region. The segment at 154-197 (CSFNITTVVRDKTKQVHALFYRLDIVPIDNDNSTNSTNYRLINC) is V2. The tract at residues 297–329 (CTRPYRNIRQRTSIGLGQALYTTKTRSIIGQAY) is V3. Cysteines 297 and 330 form a disulfide. Residues Asn331, Asn338, and Asn353 are each glycosylated (N-linked (GlcNAc...) asparagine; by host). Residues 362–372 (SSGGDPEITTH) form a CD4-binding loop region. Intrachain disulfides connect Cys376–Cys442 and Cys383–Cys415. A V4 region spans residues 383 to 415 (CNTSGLFNSTWDISKSEWANSTESDDKPITLQC). Residues Asn384, Asn390, Asn402, Asn441, Asn445, Asn458, Asn459, and Asn462 are each glycosylated (N-linked (GlcNAc...) asparagine; by host). 2 V5 regions span residues 457 to 468 (TNNSSNETFRPG) and 460 to 468 (SSNETFRPG). A fusion peptide region spans residues 509–529 (AIGLGAMFLGFLGAAGSTMGA). The immunosuppression stretch occupies residues 571 to 589 (KQLQARILAVERYLKDQQL). Cysteines 595 and 601 form a disulfide. N-linked (GlcNAc...) asparagine; by host glycosylation is found at Asn608, Asn613, Asn622, Asn634, and Asn671. Residues 630 to 664 (REIDNYTGLIYRLIEESQTQQEKNEQELLELDKWA) adopt a coiled-coil conformation. An MPER; binding to GalCer region spans residues 659 to 680 (ELDKWASLWNWFNITQWLWYIK). The chain crosses the membrane as a helical span at residues 682-702 (FIMIVGGLIGLRIVFAVLSLV). Topologically, residues 703–853 (NRVRQGYSPL…IRQGLERLLL (151 aa)) are cytoplasmic. A YXXL motif; contains endocytosis signal motif is present at residues 709-712 (YSPL). 2 S-palmitoyl cysteine; by host lipidation sites follow: Cys761 and Cys834. The Di-leucine internalization motif motif lies at 852–853 (LL).

The protein belongs to the HIV-1 env protein family. The mature envelope protein (Env) consists of a homotrimer of non-covalently associated gp120-gp41 heterodimers. The resulting complex protrudes from the virus surface as a spike. There seems to be as few as 10 spikes on the average virion. Interacts with host CD4, CCR5 and CXCR4. Gp120 also interacts with the C-type lectins CD209/DC-SIGN and CLEC4M/DC-SIGNR (collectively referred to as DC-SIGN(R)). Gp120 and gp41 interact with GalCer. Gp120 interacts with host ITGA4/ITGB7 complex; on CD4+ T-cells, this interaction results in rapid activation of integrin ITGAL/LFA-1, which facilitates efficient cell-to-cell spreading of HIV-1. Gp120 interacts with cell-associated heparan sulfate; this interaction increases virus infectivity on permissive cells and may be involved in infection of CD4- cells. In terms of assembly, the mature envelope protein (Env) consists of a homotrimer of non-covalently associated gp120-gp41 heterodimers. The resulting complex protrudes from the virus surface as a spike. There seems to be as few as 10 spikes on the average virion. Post-translationally, highly glycosylated by host. The high number of glycan on the protein is reffered to as 'glycan shield' because it contributes to hide protein sequence from adaptive immune system. In terms of processing, palmitoylation of the transmembrane protein and of Env polyprotein (prior to its proteolytic cleavage) is essential for their association with host cell membrane lipid rafts. Palmitoylation is therefore required for envelope trafficking to classical lipid rafts, but not for viral replication. Specific enzymatic cleavages in vivo yield mature proteins. Envelope glycoproteins are synthesized as an inactive precursor that is heavily N-glycosylated and processed likely by host cell furin in the Golgi to yield the mature SU and TM proteins. The cleavage site between SU and TM requires the minimal sequence [KR]-X-[KR]-R. About 2 of the 9 disulfide bonds of gp41 are reduced by P4HB/PDI, following binding to CD4 receptor.

It is found in the virion membrane. The protein localises to the host cell membrane. Its subcellular location is the host endosome membrane. Functionally, oligomerizes in the host endoplasmic reticulum into predominantly trimers. In a second time, gp160 transits in the host Golgi, where glycosylation is completed. The precursor is then proteolytically cleaved in the trans-Golgi and thereby activated by cellular furin or furin-like proteases to produce gp120 and gp41. In terms of biological role, attaches the virus to the host lymphoid cell by binding to the primary receptor CD4. This interaction induces a structural rearrangement creating a high affinity binding site for a chemokine coreceptor like CXCR4 and/or CCR5. Acts as a ligand for CD209/DC-SIGN and CLEC4M/DC-SIGNR, which are respectively found on dendritic cells (DCs), and on endothelial cells of liver sinusoids and lymph node sinuses. These interactions allow capture of viral particles at mucosal surfaces by these cells and subsequent transmission to permissive cells. HIV subverts the migration properties of dendritic cells to gain access to CD4+ T-cells in lymph nodes. Virus transmission to permissive T-cells occurs either in trans (without DCs infection, through viral capture and transmission), or in cis (following DCs productive infection, through the usual CD4-gp120 interaction), thereby inducing a robust infection. In trans infection, bound virions remain infectious over days and it is proposed that they are not degraded, but protected in non-lysosomal acidic organelles within the DCs close to the cell membrane thus contributing to the viral infectious potential during DCs' migration from the periphery to the lymphoid tissues. On arrival at lymphoid tissues, intact virions recycle back to DCs' cell surface allowing virus transmission to CD4+ T-cells. Acts as a class I viral fusion protein. Under the current model, the protein has at least 3 conformational states: pre-fusion native state, pre-hairpin intermediate state, and post-fusion hairpin state. During fusion of viral and target intracellular membranes, the coiled coil regions (heptad repeats) assume a trimer-of-hairpins structure, positioning the fusion peptide in close proximity to the C-terminal region of the ectodomain. The formation of this structure appears to drive apposition and subsequent fusion of viral and target cell membranes. Complete fusion occurs in host cell endosomes and is dynamin-dependent, however some lipid transfer might occur at the plasma membrane. The virus undergoes clathrin-dependent internalization long before endosomal fusion, thus minimizing the surface exposure of conserved viral epitopes during fusion and reducing the efficacy of inhibitors targeting these epitopes. Membranes fusion leads to delivery of the nucleocapsid into the cytoplasm. The polypeptide is Envelope glycoprotein gp160 (Homo sapiens (Human)).